A 407-amino-acid polypeptide reads, in one-letter code: Phosphopentomutase (407 aa).

6 residues coordinate Mn(2+): Asp10, Asp306, His311, Asp347, His348, and His359.

Belongs to the phosphopentomutase family. The cofactor is Mn(2+).

Its subcellular location is the cytoplasm. It catalyses the reaction 2-deoxy-alpha-D-ribose 1-phosphate = 2-deoxy-D-ribose 5-phosphate. It carries out the reaction alpha-D-ribose 1-phosphate = D-ribose 5-phosphate. It participates in carbohydrate degradation; 2-deoxy-D-ribose 1-phosphate degradation; D-glyceraldehyde 3-phosphate and acetaldehyde from 2-deoxy-alpha-D-ribose 1-phosphate: step 1/2. Functionally, isomerase that catalyzes the conversion of deoxy-ribose 1-phosphate (dRib-1-P) and ribose 1-phosphate (Rib-1-P) to deoxy-ribose 5-phosphate (dRib-5-P) and ribose 5-phosphate (Rib-5-P), respectively. The sequence is that of Phosphopentomutase from Yersinia pestis bv. Antiqua (strain Angola).